Reading from the N-terminus, the 93-residue chain is Putative septation protein SpoVG (93 aa).

Belongs to the SpoVG family.

Could be involved in septation. In Lachnoclostridium phytofermentans (strain ATCC 700394 / DSM 18823 / ISDg) (Clostridium phytofermentans), this protein is Putative septation protein SpoVG.